A 129-amino-acid polypeptide reads, in one-letter code: Small ribosomal subunit protein uS12 (129 aa).

Aspartate 89 is modified (3-methylthioaspartic acid). The segment at 110 to 129 (RKQGRSRYGAPRKQVVATKK) is disordered.

The protein belongs to the universal ribosomal protein uS12 family. As to quaternary structure, part of the 30S ribosomal subunit. Contacts proteins S8 and S17. May interact with IF1 in the 30S initiation complex.

With S4 and S5 plays an important role in translational accuracy. Functionally, interacts with and stabilizes bases of the 16S rRNA that are involved in tRNA selection in the A site and with the mRNA backbone. Located at the interface of the 30S and 50S subunits, it traverses the body of the 30S subunit contacting proteins on the other side and probably holding the rRNA structure together. The combined cluster of proteins S8, S12 and S17 appears to hold together the shoulder and platform of the 30S subunit. The chain is Small ribosomal subunit protein uS12 from Rickettsia bellii (strain RML369-C).